We begin with the raw amino-acid sequence, 139 residues long: Ribulose bisphosphate carboxylase small subunit (139 aa).

The protein belongs to the RuBisCO small chain family. In terms of assembly, heterohexadecamer of 8 large and 8 small subunits.

The protein resides in the plastid. It is found in the chloroplast. Functionally, ruBisCO catalyzes two reactions: the carboxylation of D-ribulose 1,5-bisphosphate, the primary event in carbon dioxide fixation, as well as the oxidative fragmentation of the pentose substrate in the photorespiration process. Both reactions occur simultaneously and in competition at the same active site. Although the small subunit is not catalytic it is essential for maximal activity. In Pylaiella littoralis (Seaweed), this protein is Ribulose bisphosphate carboxylase small subunit.